The following is a 69-amino-acid chain: UPF0248 protein AF_0420 (69 aa).

This sequence belongs to the UPF0248 family.

The protein is UPF0248 protein AF_0420 of Archaeoglobus fulgidus (strain ATCC 49558 / DSM 4304 / JCM 9628 / NBRC 100126 / VC-16).